The following is a 382-amino-acid chain: Cytochrome b (382 aa).

4 helical membrane-spanning segments follow: residues 33–53, 77–98, 113–133, and 178–198; these read FGSLLGLCLASQIVTGLFLAM, WLVRNMHANGASFFFICLYTHI, WTVGVILLLLTMMTAFVGYVL, and FFAFHFLLPFVIAAFTAIHLL. 2 residues coordinate heme b: His-83 and His-97. Heme b is bound by residues His-182 and His-196. An a ubiquinone-binding site is contributed by His-201. A run of 4 helical transmembrane segments spans residues 226-246, 288-308, 320-340, and 347-367; these read LKDLLGFTILILTLTSVALLT, LGGVLALLASVLILATVPFLQ, LTQLVFWTLIANIAILTWIGG, and FVSIGQLASLAYFSIFLIIIP.

The protein belongs to the cytochrome b family. In terms of assembly, the cytochrome bc1 complex contains 3 respiratory subunits (MT-CYB, CYC1 and UQCRFS1), 2 core proteins (UQCRC1 and UQCRC2) and probably 6 low-molecular weight proteins. Heme b serves as cofactor.

The protein localises to the mitochondrion inner membrane. In terms of biological role, component of the ubiquinol-cytochrome c reductase complex (complex III or cytochrome b-c1 complex) that is part of the mitochondrial respiratory chain. The b-c1 complex mediates electron transfer from ubiquinol to cytochrome c. Contributes to the generation of a proton gradient across the mitochondrial membrane that is then used for ATP synthesis. In Sigmops gracilis (Slender fangjaw), this protein is Cytochrome b (mt-cyb).